We begin with the raw amino-acid sequence, 602 residues long: Protein indeterminate-domain 5, chloroplastic (602 aa).

Composition is skewed to low complexity over residues 1–10 (MAASSSSAAS) and 21–30 (HLLPPNSSAA). A chloroplast-targeting transit peptide spans 1 to 50 (MAASSSSAASFFGVRQDDQSHLLPPNSSAAAPPPPPPHHQAPLPPLEAPP). Residues 1–65 (MAASSSSAAS…NQPRTPNSDA (65 aa)) form a disordered region. The segment covering 31 to 48 (APPPPPPHHQAPLPPLEA) has biased composition (pro residues). At Thr-60 the chain carries Phosphothreonine. A Phosphoserine modification is found at Ser-71. C2H2-type zinc fingers lie at residues 81 to 103 (FICE…RRGH) and 122 to 152 (YLCP…YRKH). A C2H2-type 2; degenerate zinc finger spans residues 157–180 (WKCDKCSKRYAVQSDWKAHSKTCG). Residues Cys-159, Cys-162, His-175, Cys-179, Cys-186, Cys-188, His-201, and Cys-205 each coordinate Zn(2+). The segment at 184–207 (YRCDCGTLFSRRDSFITHRAFCDA) adopts a CCHC-type 2; atypical zinc-finger fold. The segment at 194–206 (RRDSFITHRAFCD) is SHR-binding. Disordered stretches follow at residues 443–467 (KAAQ…NNAS) and 537–602 (KSMS…HASF). Low complexity-rich tracts occupy residues 448–467 (GSTS…NNAS), 546–560 (QQQQ…QQQQ), and 570–579 (SSSDSADRSS).

In terms of assembly, binds to RGA and SCL3 competitively. Highly expressed in leaf tissues.

The protein localises to the plastid. It is found in the chloroplast. Transcription factor acting as a positive regulator of the starch synthase SS4. Controls chloroplast development and starch granule formation. Binds DNA via its zinc fingers. Recognizes and binds to SCL3 promoter sequence 5'-AGACAA-3' to promote its expression when in complex with RGA. The sequence is that of Protein indeterminate-domain 5, chloroplastic from Arabidopsis thaliana (Mouse-ear cress).